Consider the following 389-residue polypeptide: Vacuolar protein sorting-associated protein vts1 (389 aa).

Residues 149–335 (NPQRKAKTPS…RPSQPTKASP (187 aa)) are disordered. Composition is skewed to polar residues over residues 156–177 (TPSN…TLPT), 184–219 (TNAS…SSEP), and 227–282 (SLSS…PESK). The segment covering 294-306 (TSITTTSTSIDPS) has biased composition (low complexity). Positions 308–334 (AFSSKSTLATTRTNAPLSRPSQPTKAS) are enriched in polar residues.

Belongs to the VTA1 family. As to quaternary structure, homodimer (in cytoplasm).

The protein localises to the cytoplasm. It is found in the endosome membrane. Functionally, has a role in the formation of the multivesicular body (MVB). Required for the sorting of lipids to form intralumenal vesicles and for fluid-phase transport to the vacuole. Required for sorting several plasma membrane proteins into the MVB. This Schizosaccharomyces pombe (strain 972 / ATCC 24843) (Fission yeast) protein is Vacuolar protein sorting-associated protein vts1 (vts1).